The sequence spans 387 residues: ATP phosphoribosyltransferase regulatory subunit (387 aa).

It belongs to the class-II aminoacyl-tRNA synthetase family. HisZ subfamily. As to quaternary structure, heteromultimer composed of HisG and HisZ subunits.

It is found in the cytoplasm. Its pathway is amino-acid biosynthesis; L-histidine biosynthesis; L-histidine from 5-phospho-alpha-D-ribose 1-diphosphate: step 1/9. Required for the first step of histidine biosynthesis. May allow the feedback regulation of ATP phosphoribosyltransferase activity by histidine. This Polynucleobacter asymbioticus (strain DSM 18221 / CIP 109841 / QLW-P1DMWA-1) (Polynucleobacter necessarius subsp. asymbioticus) protein is ATP phosphoribosyltransferase regulatory subunit.